A 227-amino-acid polypeptide reads, in one-letter code: Mitochondrial inner membrane protease ATP23 (227 aa).

His124 provides a ligand contact to a divalent metal cation. Glu125 is an active-site residue. His128 provides a ligand contact to a divalent metal cation.

It belongs to the peptidase M76 family. In terms of assembly, interacts with ATP6.

The protein localises to the mitochondrion inner membrane. Has a dual role in the assembly of mitochondrial ATPase. Acts as a protease that removes the N-terminal 10 residues of mitochondrial ATPase CF(0) subunit 6 (ATP6) at the intermembrane space side. Also involved in the correct assembly of the membrane-embedded ATPase CF(0) particle, probably mediating association of ATP6 with the subunit 9 ring. This chain is Mitochondrial inner membrane protease ATP23 (ATP23), found in Saccharomyces cerevisiae (strain YJM789) (Baker's yeast).